Reading from the N-terminus, the 335-residue chain is Glyceraldehyde-3-phosphate dehydrogenase, cytosolic (335 aa).

NAD(+) contacts are provided by residues 13–14 (RI), D35, and R80. Residues 151–153 (SCT), T182, 211–212 (TG), and R234 each bind D-glyceraldehyde 3-phosphate. Residue C152 is the Nucleophile of the active site. Position 316 (N316) interacts with NAD(+).

It belongs to the glyceraldehyde-3-phosphate dehydrogenase family. In terms of assembly, homotetramer.

It localises to the cytoplasm. The enzyme catalyses D-glyceraldehyde 3-phosphate + phosphate + NAD(+) = (2R)-3-phospho-glyceroyl phosphate + NADH + H(+). Its pathway is carbohydrate degradation; glycolysis; pyruvate from D-glyceraldehyde 3-phosphate: step 1/5. The polypeptide is Glyceraldehyde-3-phosphate dehydrogenase, cytosolic (GAPC) (Gracilaria gracilis (Red alga)).